A 27-amino-acid polypeptide reads, in one-letter code: Cysteine-rich venom protein tropirin (27 aa).

This sequence belongs to the CRISP family. Post-translationally, contains 8 disulfide bonds. Expressed by the venom gland.

The protein resides in the secreted. Its function is as follows. Blocks contraction of smooth muscle elicited by high potassium-induced depolarization, but does not block caffeine-stimulated contraction. May target voltage-gated calcium channels on smooth muscle. In Tropidechis carinatus (Australian rough-scaled snake), this protein is Cysteine-rich venom protein tropirin.